We begin with the raw amino-acid sequence, 616 residues long: Chaperone protein HscA (616 aa).

Belongs to the heat shock protein 70 family.

In terms of biological role, chaperone involved in the maturation of iron-sulfur cluster-containing proteins. Has a low intrinsic ATPase activity which is markedly stimulated by HscB. Involved in the maturation of IscU. The sequence is that of Chaperone protein HscA from Escherichia coli O139:H28 (strain E24377A / ETEC).